The chain runs to 448 residues: MKSYEVNFDGLVGPTHNYGGLSYGNVASQSNSQQSSNPKEAALQGLAKMKALMEMGFQQGVLAPQERPDVAALRRLGFSGTDAQVIERAAKEAMPLLVASCSASSMWVANAATVSPSADTADGRVHFTAANLNCKYHRSIEHPTTSRVLGAMFANQQHFAHHAALPAVAQFGDEGAANHTRFCREYGDAGVEFFVFGRSAFDTRYPAPQKYPARQTLEASQAVARLHGLRDDGVVYAQQNPAVIDQGVFHNDVIAVGNGEVLFYHEDAFLDTDQMLAELQAKLAKVGGKFQSVCVPRSAVTVDDAVRSYLFNSQLLSRPDGSMLLIVPEECRGNERVWNYLQGLTSSGGLIREVKVFDLKQSMQNGGGPACLRLRVALNETELAAVNPGVIMTAPLYGSLTAWVEKHYRDRLTESDLADPQLLLECRTALDELTQILKLGAVYPFQIN.

Substrate contacts are provided by residues 19-28 (GGLSYGNVAS), asparagine 110, and 137-138 (HR). The active site involves glutamate 174. Position 214 (arginine 214) interacts with substrate. Histidine 250 is a catalytic residue. Substrate contacts are provided by aspartate 252 and asparagine 365. The active-site Nucleophile is the cysteine 371.

The protein belongs to the succinylarginine dihydrolase family. As to quaternary structure, homodimer.

It carries out the reaction N(2)-succinyl-L-arginine + 2 H2O + 2 H(+) = N(2)-succinyl-L-ornithine + 2 NH4(+) + CO2. Its pathway is amino-acid degradation; L-arginine degradation via AST pathway; L-glutamate and succinate from L-arginine: step 2/5. In terms of biological role, catalyzes the hydrolysis of N(2)-succinylarginine into N(2)-succinylornithine, ammonia and CO(2). The protein is N-succinylarginine dihydrolase of Pseudomonas fluorescens (strain Pf0-1).